The primary structure comprises 284 residues: Tropomyosin (284 aa).

Residues 1 to 284 (MDGIKKKMIA…DQTFAELTGY (284 aa)) are a coiled coil. Residues 111-131 (TKLEEASKTAEESERGRKDLE) are disordered.

This sequence belongs to the tropomyosin family. Homodimer.

In terms of biological role, tropomyosin, in association with the troponin complex, plays a central role in the calcium dependent regulation of muscle contraction. The polypeptide is Tropomyosin (Schistosoma haematobium (Blood fluke)).